Consider the following 301-residue polypeptide: Mitochondrial import receptor subunit TOM40 homolog (301 aa).

The interval 1–20 is disordered; it reads MATPTESEFAAPIPQTNPGS.

This sequence belongs to the Tom40 family. In terms of assembly, forms part of the preprotein translocase complex of the outer mitochondrial membrane (TOM complex). Interacts with mitochondrial targeting sequences.

It localises to the mitochondrion outer membrane. Functionally, channel-forming protein essential for import of protein precursors into mitochondria. Specifically required for nnt-1 accumulation in the mitochondria and may be involved in the secretion of daf-28/insulin from the mitochondria. Required for embryonic and larval development. The chain is Mitochondrial import receptor subunit TOM40 homolog from Caenorhabditis briggsae.